The chain runs to 184 residues: Ribosome-recycling factor (184 aa).

The protein belongs to the RRF family.

The protein localises to the cytoplasm. Responsible for the release of ribosomes from messenger RNA at the termination of protein biosynthesis. May increase the efficiency of translation by recycling ribosomes from one round of translation to another. This is Ribosome-recycling factor from Caldicellulosiruptor bescii (strain ATCC BAA-1888 / DSM 6725 / KCTC 15123 / Z-1320) (Anaerocellum thermophilum).